A 469-amino-acid chain; its full sequence is Putative arginine/ornithine antiporter (469 aa).

Transmembrane regions (helical) follow at residues 8–28, 44–64, 90–110, 144–164, 179–199, 213–233, 254–274, 301–321, 347–367, 375–395, 417–437, and 439–459; these read GFWL…IFSL, AWLL…HLSI, AGFT…VAII, LTFA…VASI, VLGF…SLFG, IGIG…FVGI, ITGL…TMGV, VIMA…WILL, SPVI…FSVI, FTFL…VSAI, DGLI…TGTA, and LTTF…YPFV.

Belongs to the amino acid-polyamine-organocation (APC) superfamily. Basic amino acid/polyamine antiporter (APA) (TC 2.A.3.2) family.

The protein resides in the cell membrane. It carries out the reaction L-ornithine(in) + L-arginine(out) = L-ornithine(out) + L-arginine(in). Its function is as follows. Catalyzes electroneutral exchange between L-arginine and L-ornithine. This is Putative arginine/ornithine antiporter (yvsH) from Bacillus subtilis (strain 168).